The primary structure comprises 830 residues: MIAENKDYVKPDVNTLPAVLPAVAIRDVVMFPGMSLPLSVSRSKSIAAINLALDSNKYVVAVAQKEAEVEDPKAEDIYRFGVLSEITQSLKMPDGSIKVFLQGIARVKIEHLDFNNIANSWFASVFYPADEKVSGPEVTALMRQLLDEFEEYATVSRRIAVEGVSFFRQIEDPSRLADTIASNIIVKTSDRQDVLEAVNPKDRLELLIKILANEVEIISLEEKIHSKVRAQIEKNQKEYYLNEQMKAIQKELSQKDDFQKEIDELRSKIKKNGLPKNAKESAEKELDRLAKMAPFSPESTVSRTYLDWLVNMPWNSSTNDILDLKKAKEVMDADHYGLDKPKERILEYLAVSKLTNSLKGPILCFAGPPGVGKTSLAKSIASAVGRKFVRMSLGGVRDESEIRGHRRTYIGSMPGRIIQGISKAKSNNPVFLLDEIDKMGSDWRGDPAAALLELLDPEQNKDFSDHYLDVPFDVSKVMFITTANSLSSIPVTLRDRLEIIDFSGYTEYEKEAIAQNHLIPRQMKEHGLKEGSLEIGLPAVKLIMRDYVREAGVRNFEREISTICRKAAKMYVENCGKTVTVTKDNLHDFLGVPRYTNFTTEENGVGISTGLAWTSVGGETLSIEASEISDGKGRIMLTGKLGDVMKESVHAALTYARSKGYGKGIDFNKTDFHIHFPEGAVPKDGPSAGTAVTTALISLLTKNPVKKNLAMTGEVTITGRVLPIGGVKEKFMAAYREGVKTILYPHTNEKDVSEVPEVIRKQLKLIPVKHMDEIVKIAFEKGEPKSSFKKSKTAPKKESAKKAAKSKKPAVKKPAVKKTKQVKKTAKKKK.

Positions 20–215 (LPAVAIRDVV…LLIKILANEV (196 aa)) constitute a Lon N-terminal domain. 367–374 (GPPGVGKT) provides a ligand contact to ATP. In terms of domain architecture, Lon proteolytic spans 602 to 781 (ENGVGISTGL…DEIVKIAFEK (180 aa)). Residues S687 and K730 contribute to the active site. A disordered region spans residues 784 to 830 (PKSSFKKSKTAPKKESAKKAAKSKKPAVKKPAVKKTKQVKKTAKKKK). The segment covering 802 to 830 (KAAKSKKPAVKKPAVKKTKQVKKTAKKKK) has biased composition (basic residues).

Belongs to the peptidase S16 family. In terms of assembly, homohexamer. Organized in a ring with a central cavity.

The protein resides in the cytoplasm. The catalysed reaction is Hydrolysis of proteins in presence of ATP.. Functionally, ATP-dependent serine protease that mediates the selective degradation of mutant and abnormal proteins as well as certain short-lived regulatory proteins. Required for cellular homeostasis and for survival from DNA damage and developmental changes induced by stress. Degrades polypeptides processively to yield small peptide fragments that are 5 to 10 amino acids long. Binds to DNA in a double-stranded, site-specific manner. This chain is Lon protease, found in Elusimicrobium minutum (strain Pei191).